The sequence spans 84 residues: M-zodatoxin-Lt2b (84 aa).

The first 22 residues, 1-22, serve as a signal peptide directing secretion; sequence MKYFVIALALAVALVCIAESTA. Residues 23–58 constitute a propeptide that is removed on maturation; it reads YEVNEELENELDDLDDAAWLAVAEELQGLEDFEESR. Positions 55 to 58 match the Processing quadruplet motif motif; it reads EESR.

Post-translationally, cleavage of the propeptide depends on the processing quadruplet motif (XXXR, with at least one of X being E). As to expression, expressed by the venom gland.

It is found in the secreted. In terms of biological role, has antimicrobial activity against both Gram-positive and Gram-negative bacteria, and yeasts. Also has a strong hemolytic activity against rabbit erythrocytes. Causes paralysis, but is not lethal when injected into insect (M.domestica) larvae. The chain is M-zodatoxin-Lt2b from Lachesana tarabaevi (Spider).